We begin with the raw amino-acid sequence, 528 residues long: GMP synthase [glutamine-hydrolyzing] (528 aa).

Positions 13–203 (TVLVVDFGAQ…LYEAAGCRPT (191 aa)) constitute a Glutamine amidotransferase type-1 domain. C90 serves as the catalytic Nucleophile. Active-site residues include H177 and E179. The GMPS ATP-PPase domain occupies 204–402 (WTMVNIVEDQ…LGLPAEMVWR (199 aa)). 231–237 (SGGVDSA) contacts ATP.

Homodimer.

The enzyme catalyses XMP + L-glutamine + ATP + H2O = GMP + L-glutamate + AMP + diphosphate + 2 H(+). Its pathway is purine metabolism; GMP biosynthesis; GMP from XMP (L-Gln route): step 1/1. Catalyzes the synthesis of GMP from XMP. The chain is GMP synthase [glutamine-hydrolyzing] from Thermobifida fusca (strain YX).